The primary structure comprises 101 residues: Gastrin (101 aa).

An N-terminal signal peptide occupies residues 1-21 (MQRLCVYVLIFALALAAFSEA). The interval 22-82 (SWKPRSQQPD…SKKQGPWLEE (61 aa)) is disordered. Gln59 carries the post-translational modification Pyrrolidone carboxylic acid; in form big gastrin. At Gln76 the chain carries Pyrrolidone carboxylic acid; in form gastrin. Tyr87 carries the post-translational modification Sulfotyrosine; partial. The residue at position 92 (Phe92) is a Phenylalanine amide. Ser96 bears the Phosphoserine mark. Positions 96–101 (SAEDEN) are cleaved as a propeptide — removed in mature form.

The protein belongs to the gastrin/cholecystokinin family. Post-translationally, two different processing pathways probably exist in antral G-cells. In the dominant pathway progastrin is cleaved at three sites resulting in two major bioactive gastrins, gastrin-34 and gastrin-17. In the putative alternative pathway, progastrin may be processed only at the most C-terminal dibasic site resulting in the synthesis of gastrin-71. Sulfation enhances proteolytic processing, and blocks peptide degradation. Levels of sulfation differ between proteolytically-cleaved gastrins. Thus, gastrin-6 is almost 73% sulfated, whereas the larger gastrins are less than 50% sulfated. Sulfation levels are also tissue-specific.

The protein resides in the secreted. Functionally, gastrin stimulates the stomach mucosa to produce and secrete hydrochloric acid and the pancreas to secrete its digestive enzymes. It also stimulates smooth muscle contraction and increases blood circulation and water secretion in the stomach and intestine. The polypeptide is Gastrin (GAST) (Homo sapiens (Human)).